The chain runs to 590 residues: Nuclear receptor subfamily 2 group C member 1 (590 aa).

Residues 1 to 166 form a required for interaction with KAT2B region; the sequence is MATIEEIAHQ…RLQRCIAFGM (166 aa). Residues 98 to 173 constitute a DNA-binding region (nuclear receptor); it reads FDLCVVCGDK…FGMKQDSVQC (76 aa). 2 consecutive NR C4-type zinc fingers follow at residues 101-121 and 137-156; these read CVVC…CEGC and CRGS…CQYC. 2 positions are modified to phosphoserine: Ser-185 and Ser-203. Thr-208 is modified (phosphothreonine). Phosphothreonine; by MAPK1 is present on Thr-210. Lys-238 is covalently cross-linked (Glycyl lysine isopeptide (Lys-Gly) (interchain with G-Cter in SUMO); alternate). Lys-238 participates in a covalent cross-link: Glycyl lysine isopeptide (Lys-Gly) (interchain with G-Cter in SUMO2); alternate. In terms of domain architecture, NR LBD spans 333-577; the sequence is EGMEGSPHLI…SVIPHILKME (245 aa). Ser-461 and Ser-568 each carry phosphoserine; by PKC. Positions 571–590 are required for interaction with NRIP1; that stretch reads PHILKMEPADYNSQIIGHSL. A Glycyl lysine isopeptide (Lys-Gly) (interchain with G-Cter in SUMO2) cross-link involves residue Lys-575.

Belongs to the nuclear hormone receptor family. NR2 subfamily. As to quaternary structure, homodimer. Heterodimer; with NR2C2 which is required for chromatin remodeling and for binding to promoter regions such as globin DR1 repeats. Interacts with ESR1; the interaction prevents homodimerization of ESR1 and suppresses its transcriptional activity and cell growth. Interacts with NRIP1 (via its LXXLL motifs); the interaction provides corepressor activity. Interacts with HDAC3 (via the DNA-binding domain); the interaction recruits phosphorylated NR2C1 to PML bodies for sumoylation. Interacts with HDAC4 (via the DNA-binding domain). Interacts with PIAS1; the interaction is required for sumoylation of NR2C1. Interacts with UBE2I; the interaction is required for sumoylation of NR2C1. Interacts with KAT2B; the interaction acts as a corepressor of gene expression. In terms of processing, sumoylation requires both PIAS1 and UBE2I. Sumoylation appears to dissociate NR2C1 from the PML nuclear bodies. Enhances the interaction with NRIP1 but inhibits interaction with KAT2B. In proliferating cells, stimulation by all-trans retinoic acid, activation of MAPK1-mediated phosphorylation and recruitment to PML bodies with subsequent sumoylation, suppresses OCT4 expression. Post-translationally, phosphorylated on several serine and threonine residues. Phosphorylation on Thr-210, stimulated by all-trans retinoic acid (atRA) mediates PML location and sumoylation in proliferating cells which then modulates its association with effector molecules, KAT2B and NRIP1. Phosphorylation on Ser-568 by PKC is important for protein stability and function as activator of RARB. As to expression, isoform 1 is highly expressed in the adlumenal compartment of the seminiferous tubule of adult testes (at protein level) and in the eyes of newborn animals. Weakly expressed in other adult organs including the seminal vesicle, prostate, ovary, adrenal gland, heart, thymus, placenta and brain. Expressed during embryonic stages in developing eyes, brain and cartilage primordia (at protein level). Also expressed in the developing spinal motor neurons and in the sympathetic-, parasympathetic- and sensory ganglia of the embryonic PNS. Expressed in the developing neural epithelia of the inner ear, nasal cavity, tongue and retina. At day 16.5, expressed in various tissues including kidney and intestine. In contrast, isoform 2 is widely expressed at a low level throughout the adult testis.

The protein resides in the nucleus. It localises to the PML body. In terms of biological role, orphan nuclear receptor. Binds the IR7 element in the promoter of its own gene in an autoregulatory negative feedback mechanism. Primarily repressor of a broad range of genes including ESR1 and RARB. Together with NR2C2, forms the core of the DRED (direct repeat erythroid-definitive) complex that represses embryonic and fetal globin transcription. Binds to hormone response elements (HREs) consisting of two 5'-AGGTCA-3' half site direct repeat consensus sequences. Also activator of OCT4 gene expression. Plays a fundamental role in early embryogenesis and regulates embryonic stem cell proliferation and differentiation. Mediator of retinoic acid-regulated preadipocyte proliferation. The protein is Nuclear receptor subfamily 2 group C member 1 of Mus musculus (Mouse).